The following is a 303-amino-acid chain: Monoglyceride lipase (303 aa).

At Thr10 the chain carries Phosphothreonine. At Tyr58 the chain carries 3'-nitrotyrosine. The active-site Nucleophile is Ser122. A Phosphoserine modification is found at Ser189. Catalysis depends on charge relay system residues Asp239 and His269.

Belongs to the AB hydrolase superfamily. Monoacylglycerol lipase family. In terms of assembly, homodimer. Ubiquitous. Highly expressed in adipose tissue, adrenal gland, ovary, heart, spleen, lung, skeletal muscle, kidney and testis. Highly expressed throughout the brain.

It is found in the cytoplasm. It localises to the cytosol. The protein localises to the membrane. The catalysed reaction is Hydrolyzes glycerol monoesters of long-chain fatty acids.. The enzyme catalyses a 1-acylglycerol + H2O = glycerol + a fatty acid + H(+). It catalyses the reaction a 2-acylglycerol + H2O = glycerol + a fatty acid + H(+). It carries out the reaction 1-octanoylglycerol + H2O = octanoate + glycerol + H(+). The catalysed reaction is 2-(5Z,8Z,11Z,14Z-eicosatetraenoyl)-glycerol + H2O = glycerol + (5Z,8Z,11Z,14Z)-eicosatetraenoate + H(+). The enzyme catalyses 1-decanoylglycerol + H2O = decanoate + glycerol + H(+). It catalyses the reaction 1-dodecanoylglycerol + H2O = dodecanoate + glycerol + H(+). It carries out the reaction 1-tetradecanoylglycerol + H2O = tetradecanoate + glycerol + H(+). The catalysed reaction is 2-hexadecanoylglycerol + H2O = glycerol + hexadecanoate + H(+). The enzyme catalyses 1-(9Z-octadecenoyl)-glycerol + H2O = glycerol + (9Z)-octadecenoate + H(+). It catalyses the reaction 2-(9Z-octadecenoyl)-glycerol + H2O = glycerol + (9Z)-octadecenoate + H(+). It carries out the reaction 2-(9Z,12Z-octadecadienoyl)-glycerol + H2O = (9Z,12Z)-octadecadienoate + glycerol + H(+). The catalysed reaction is 1-(5Z,8Z,11Z,14Z-eicosatetraenoyl)-glycerol + H2O = glycerol + (5Z,8Z,11Z,14Z)-eicosatetraenoate + H(+). The enzyme catalyses 1-(9Z,12Z-octadecadienoyl)-glycerol + H2O = (9Z,12Z)-octadecadienoate + glycerol + H(+). It catalyses the reaction 1-hexadecanoylglycerol + H2O = glycerol + hexadecanoate + H(+). It carries out the reaction 1-octadecanoylglycerol + H2O = octadecanoate + glycerol + H(+). The catalysed reaction is prostaglandin E2 1-glyceryl ester + H2O = prostaglandin E2 + glycerol + H(+). The enzyme catalyses prostaglandin D2-1-glycerol ester + H2O = prostaglandin D2 + glycerol + H(+). It catalyses the reaction 2-glyceryl-15-deoxy-Delta(12,14)-prostaglandin J2 + H2O = 15-deoxy-Delta(12,14)-prostaglandin J2 + glycerol + H(+). It carries out the reaction prostaglandin F2alpha 1-glyceryl ester + H2O = prostaglandin F2alpha + glycerol + H(+). The protein operates within glycerolipid metabolism; triacylglycerol degradation. Functionally, converts monoacylglycerides to free fatty acids and glycerol. Hydrolyzes the endocannabinoid 2-arachidonoylglycerol, and thereby contributes to the regulation of endocannabinoid signaling, nociperception and perception of pain. Regulates the levels of fatty acids that serve as signaling molecules and promote cancer cell migration, invasion and tumor growth. The chain is Monoglyceride lipase from Rattus norvegicus (Rat).